We begin with the raw amino-acid sequence, 158 residues long: Na(+)/H(+) antiporter subunit E (158 aa).

Helical transmembrane passes span 21-41 (SPSA…LFFF) and 51-71 (LWKL…LYLA).

The protein belongs to the CPA3 antiporters (TC 2.A.63) subunit E family. Forms a heterooligomeric complex that consists of seven subunits: MrpA, MrpB, MrpC, MrpD, MrpE, MrpF and MrpG.

The protein resides in the cell membrane. Functionally, mrp complex is a Na(+)/H(+) antiporter that is considered to be the major Na(+) excretion system in B.subtilis. Has a major role in Na(+) resistance and a minor role in Na(+)- and K(+)-dependent pH homeostasis as compared to TetB. MrpA may be the actual Na(+)/H(+) antiporter, although the six other Mrp proteins are all required for Na(+)/H(+) antiport activity and Na(+) resistance. MrpA is required for initiation of sporulation when external Na(+) concentration increases. Also transports Li(+) but not K(+), Ca(2+) or Mg(2+). This is Na(+)/H(+) antiporter subunit E (mrpE) from Bacillus subtilis (strain 168).